The primary structure comprises 134 residues: Small ribosomal subunit protein uS9c (134 aa).

Residues Asp105–Ala114 are compositionally biased toward basic and acidic residues. The tract at residues Asp105–Arg134 is disordered. The segment covering Lys115–Arg134 has biased composition (basic residues).

Belongs to the universal ribosomal protein uS9 family.

Its subcellular location is the plastid. It localises to the cyanelle. The polypeptide is Small ribosomal subunit protein uS9c (rps9) (Cyanophora paradoxa).